Reading from the N-terminus, the 238-residue chain is 7-carboxy-7-deazaguanine synthase (238 aa).

Residues Ile14–Gly16 and Arg29 each bind substrate. The 215-residue stretch at Val20–Asn234 folds into the Radical SAM core domain. Residues Cys33, Cys37, and Cys40 each coordinate [4Fe-4S] cluster. Ser42 serves as a coordination point for Mg(2+). Residue Ser80 coordinates substrate. S-adenosyl-L-methionine contacts are provided by residues Gly82 and Ser126–Lys128.

This sequence belongs to the radical SAM superfamily. 7-carboxy-7-deazaguanine synthase family. Homodimer. [4Fe-4S] cluster is required as a cofactor. The cofactor is S-adenosyl-L-methionine. It depends on Mg(2+) as a cofactor.

The enzyme catalyses 6-carboxy-5,6,7,8-tetrahydropterin + H(+) = 7-carboxy-7-deazaguanine + NH4(+). It participates in purine metabolism; 7-cyano-7-deazaguanine biosynthesis. Its function is as follows. Catalyzes the complex heterocyclic radical-mediated conversion of 6-carboxy-5,6,7,8-tetrahydropterin (CPH4) to 7-carboxy-7-deazaguanine (CDG), a step common to the biosynthetic pathways of all 7-deazapurine-containing compounds. This chain is 7-carboxy-7-deazaguanine synthase, found in Bacillus cereus (strain ATCC 14579 / DSM 31 / CCUG 7414 / JCM 2152 / NBRC 15305 / NCIMB 9373 / NCTC 2599 / NRRL B-3711).